We begin with the raw amino-acid sequence, 750 residues long: Photosystem I P700 chlorophyll a apoprotein A1 (750 aa).

Helical transmembrane passes span 70-93 (VFSAHFGQLAIIFIWLSGMYFHGA), 156-179 (LYSTAIGGLIFAALMLFAGWFHYH), 195-219 (LNHHLAGLLGLGSLAWAGHQVHVSL), 291-309 (TAHHHLAIAVVFLVAGHMY), 346-369 (WHAQLALNLAMLGSLTIIVAHHMY), 385-411 (LSLFTHHMWIGGFTIVGAAAHAAIFMV), 433-455 (AIISHLNWACIFLGFHSFGLYIH), and 531-549 (FLVHHIHAFTIHVTVLILL). Residues C573 and C582 each contribute to the [4Fe-4S] cluster site. Helical transmembrane passes span 589–610 (HVFLGLFWMYNAISVVIFHFSW) and 664–686 (LSAYGLLFLGAHFVWAFSLMFLF). Residue H675 participates in chlorophyll a' binding. Chlorophyll a contacts are provided by M683 and Y691. W692 is a binding site for phylloquinone. The chain crosses the membrane as a helical span at residues 724 to 744 (AVGVAHYLLGGIATTWAFFLA).

Belongs to the PsaA/PsaB family. As to quaternary structure, the PsaA/B heterodimer binds the P700 chlorophyll special pair and subsequent electron acceptors. PSI consists of a core antenna complex that captures photons, and an electron transfer chain that converts photonic excitation into a charge separation. The eukaryotic PSI reaction center is composed of at least 11 subunits. P700 is a chlorophyll a/chlorophyll a' dimer, A0 is one or more chlorophyll a, A1 is one or both phylloquinones and FX is a shared 4Fe-4S iron-sulfur center. is required as a cofactor.

It localises to the plastid. It is found in the chloroplast thylakoid membrane. The enzyme catalyses reduced [plastocyanin] + hnu + oxidized [2Fe-2S]-[ferredoxin] = oxidized [plastocyanin] + reduced [2Fe-2S]-[ferredoxin]. In terms of biological role, psaA and PsaB bind P700, the primary electron donor of photosystem I (PSI), as well as the electron acceptors A0, A1 and FX. PSI is a plastocyanin-ferredoxin oxidoreductase, converting photonic excitation into a charge separation, which transfers an electron from the donor P700 chlorophyll pair to the spectroscopically characterized acceptors A0, A1, FX, FA and FB in turn. Oxidized P700 is reduced on the lumenal side of the thylakoid membrane by plastocyanin. The polypeptide is Photosystem I P700 chlorophyll a apoprotein A1 (Anthoceros angustus (Hornwort)).